A 93-amino-acid polypeptide reads, in one-letter code: MASGQQERSELDRMAREGETVVPGGTGGKSLEAQEHLADGRSRGGETRKEQLGEEGYREMGRKGGLSTMEESGGERAAREGIEIDESKFKTKS.

Residues 1–93 are disordered; the sequence is MASGQQERSE…IDESKFKTKS (93 aa). Composition is skewed to basic and acidic residues over residues 7–19, 32–62, and 73–93; these read ERSE…REGE, EAQE…EMGR, and GGER…KTKS.

It belongs to the small hydrophilic plant seed protein family.

Functionally, it is thought to provide protection for the cytoplasm during the desiccation stage of embryo development. This Triticum aestivum (Wheat) protein is Em protein H5 (EMH5).